We begin with the raw amino-acid sequence, 302 residues long: Olfactory receptor 51H1 (302 aa).

Topologically, residues 1–27 are extracellular; the sequence is MTNLNASQANHRNFILTGIPGTPDKNP. A glycan (N-linked (GlcNAc...) asparagine) is linked at asparagine 5. Residues 28–48 traverse the membrane as a helical segment; sequence WLAFPLGFLYTLTLLGNGTIL. The Cytoplasmic portion of the chain corresponds to 49-56; that stretch reads AVIKVEPS. A helical transmembrane segment spans residues 57–77; that stretch reads LHEPTYYFLSILALTDVSLSM. Over 78-101 the chain is Extracellular; the sequence is STLPSMLSIYWFNAPQIVFDACIM. A disulfide bond links cysteine 99 and cysteine 191. The helical transmembrane segment at 102-122 threads the bilayer; sequence QMFFIHVFGIVESGVLVSMAF. The Cytoplasmic segment spans residues 123–141; sequence DRFVAIRNPLHYVSILTHD. The helical transmembrane segment at 142 to 162 threads the bilayer; that stretch reads VIRKTGIAVLTRAVCVVFPVP. Over 163 to 198 the chain is Extracellular; it reads FLIKCLPFCHSNVLSHSYCLHQNMMRLACASTRINS. The chain crosses the membrane as a helical span at residues 199 to 219; it reads LYGLIVVIFTLGLDVLLTLLS. Residues 220-239 are Cytoplasmic-facing; sequence YVLTLKTVLGIVSRGERLKT. Residues 240-260 form a helical membrane-spanning segment; that stretch reads LSTCLSHMSTVLLFYVPFMGA. The Extracellular portion of the chain corresponds to 261–276; it reads ASMIHRFWEHLSPVVH. The helical transmembrane segment at 277–297 threads the bilayer; the sequence is MVMADIYLLLPPVLNPIVYSV. Topologically, residues 298–302 are cytoplasmic; that stretch reads KTKQI.

This sequence belongs to the G-protein coupled receptor 1 family.

It localises to the cell membrane. In terms of biological role, odorant receptor. This Homo sapiens (Human) protein is Olfactory receptor 51H1 (OR51H1).